The sequence spans 110 residues: Thiosulfate sulfurtransferase GlpE (110 aa).

A Rhodanese domain is found at 17 to 105 (RENGAQVVDI…WRSVYPADTS (89 aa)). Cys-65 serves as the catalytic Cysteine persulfide intermediate.

Belongs to the GlpE family.

The protein localises to the cytoplasm. It catalyses the reaction thiosulfate + hydrogen cyanide = thiocyanate + sulfite + 2 H(+). It carries out the reaction thiosulfate + [thioredoxin]-dithiol = [thioredoxin]-disulfide + hydrogen sulfide + sulfite + 2 H(+). Its function is as follows. Transferase that catalyzes the transfer of sulfur from thiosulfate to thiophilic acceptors such as cyanide or dithiols. May function in a CysM-independent thiosulfate assimilation pathway by catalyzing the conversion of thiosulfate to sulfite, which can then be used for L-cysteine biosynthesis. The polypeptide is Thiosulfate sulfurtransferase GlpE (Pseudomonas aeruginosa (strain LESB58)).